A 302-amino-acid chain; its full sequence is Aspartate carbamoyltransferase catalytic subunit (302 aa).

Carbamoyl phosphate is bound by residues R55 and T56. K83 lines the L-aspartate pocket. Carbamoyl phosphate is bound by residues R105, H133, and Q136. Positions 166 and 222 each coordinate L-aspartate. G262 and P263 together coordinate carbamoyl phosphate.

The protein belongs to the aspartate/ornithine carbamoyltransferase superfamily. ATCase family. In terms of assembly, heterododecamer (2C3:3R2) of six catalytic PyrB chains organized as two trimers (C3), and six regulatory PyrI chains organized as three dimers (R2).

The catalysed reaction is carbamoyl phosphate + L-aspartate = N-carbamoyl-L-aspartate + phosphate + H(+). Its pathway is pyrimidine metabolism; UMP biosynthesis via de novo pathway; (S)-dihydroorotate from bicarbonate: step 2/3. Catalyzes the condensation of carbamoyl phosphate and aspartate to form carbamoyl aspartate and inorganic phosphate, the committed step in the de novo pyrimidine nucleotide biosynthesis pathway. In Solibacter usitatus (strain Ellin6076), this protein is Aspartate carbamoyltransferase catalytic subunit.